The sequence spans 230 residues: Peptidyl-prolyl cis-trans isomerase FKBP16-4, chloroplastic (230 aa).

The N-terminal 56 residues, 1 to 56 (MILTMKLVHPLHHSLSSSIPFPSRKRQSKPYRCSLPSPGCEKVIRTETVLPPAPVS), are a transit peptide targeting the chloroplast. Positions 123 to 217 (GSRVAVHYVA…ELDIELLSIK (95 aa)) constitute a PPIase FKBP-type domain.

The protein belongs to the FKBP-type PPIase family.

It is found in the plastid. Its subcellular location is the chloroplast thylakoid lumen. It carries out the reaction [protein]-peptidylproline (omega=180) = [protein]-peptidylproline (omega=0). Its function is as follows. PPIases accelerate the folding of proteins. It catalyzes the cis-trans isomerization of proline imidic peptide bonds in oligopeptides. The sequence is that of Peptidyl-prolyl cis-trans isomerase FKBP16-4, chloroplastic (FKBP16-4) from Arabidopsis thaliana (Mouse-ear cress).